Reading from the N-terminus, the 123-residue chain is UPF0102 protein mma_0204 (123 aa).

The protein belongs to the UPF0102 family.

The chain is UPF0102 protein mma_0204 from Janthinobacterium sp. (strain Marseille) (Minibacterium massiliensis).